Consider the following 396-residue polypeptide: Elongation factor Tu (396 aa).

The tr-type G domain occupies 10-206 (KPHCNIGTIG…NVDEYIPQPE (197 aa)). The segment at 19–26 (GHVDHGKT) is G1. 19–26 (GHVDHGKT) contacts GTP. Thr-26 provides a ligand contact to Mg(2+). The interval 60–64 (GITIS) is G2. The G3 stretch occupies residues 81-84 (DCPG). GTP contacts are provided by residues 81 to 85 (DCPGH) and 136 to 139 (NKCD). The interval 136-139 (NKCD) is G4. Residues 174–176 (SAL) form a G5 region.

This sequence belongs to the TRAFAC class translation factor GTPase superfamily. Classic translation factor GTPase family. EF-Tu/EF-1A subfamily. As to quaternary structure, monomer.

It is found in the cytoplasm. It catalyses the reaction GTP + H2O = GDP + phosphate + H(+). Functionally, GTP hydrolase that promotes the GTP-dependent binding of aminoacyl-tRNA to the A-site of ribosomes during protein biosynthesis. The chain is Elongation factor Tu from Afipia carboxidovorans (strain ATCC 49405 / DSM 1227 / KCTC 32145 / OM5) (Oligotropha carboxidovorans).